Reading from the N-terminus, the 261-residue chain is Tyrosine phosphatase-like protein H5 (261 aa).

The region spanning 26–261 is the Tyrosine-protein phosphatase domain; the sequence is LIKKEHDKVL…ESVEQEYFVP (236 aa).

It belongs to the protein-tyrosine phosphatase family.

The polypeptide is Tyrosine phosphatase-like protein H5 (H6) (Microplitis demolitor bracovirus (isolate Webb) (MdBV)).